A 394-amino-acid polypeptide reads, in one-letter code: MNRKVLALLVPALLVAGAANAAEIYNKNGNKLDLYGKVDGLRYFSDNAGDDGDQSYARIGFKGETQINDMLTGYGQWEYNIKVNTTEGEGANSWTRLGFAGLKFGEYGSFDYGRNYGVIYDIEAWTDALPEFGGDTYTQTDVYMLGRTNGVATYRNTDFFGLVEGLNFALQYQGNNENGGAGAGEGTGNGGNRKLARENGDGFGMSTSYDFDFGLSLGAAYSSSDRSDNQVARGYGDGMNERNNYAGGETAEAWTIGAKYDAYNVYLAAMYAETRNMTYYGGGNGEGNGSIANKTQNFEVVAQYQFDFGLRPSIAYLQSKGKDLGGQEVHRGNWRYTDKDLVKYVDVGMTYYFNKNMSTYVDYKINLLDEDDDFYANNGIATDDIVGVGLVYQF.

An N-terminal signal peptide occupies residues 1–21 (MNRKVLALLVPALLVAGAANA). Residues 222 to 242 (SSSDRSDNQVARGYGDGMNER) are disordered.

It belongs to the Gram-negative porin family. As to quaternary structure, homotrimer.

The protein resides in the cell outer membrane. In terms of biological role, forms pores that allow passive diffusion of small molecules across the outer membrane. This is Outer membrane protein S1 (ompS1) from Salmonella typhi.